Here is an 874-residue protein sequence, read N- to C-terminus: Alanine--tRNA ligase (874 aa).

Zn(2+) contacts are provided by His562, His566, Cys664, and His668.

The protein belongs to the class-II aminoacyl-tRNA synthetase family. Zn(2+) is required as a cofactor.

It localises to the cytoplasm. It carries out the reaction tRNA(Ala) + L-alanine + ATP = L-alanyl-tRNA(Ala) + AMP + diphosphate. In terms of biological role, catalyzes the attachment of alanine to tRNA(Ala) in a two-step reaction: alanine is first activated by ATP to form Ala-AMP and then transferred to the acceptor end of tRNA(Ala). Also edits incorrectly charged Ser-tRNA(Ala) and Gly-tRNA(Ala) via its editing domain. This chain is Alanine--tRNA ligase, found in Neisseria meningitidis serogroup C (strain 053442).